The chain runs to 356 residues: tRNA N6-adenosine threonylcarbamoyltransferase (356 aa).

The Fe cation site is built by histidine 131 and histidine 135. Substrate-binding positions include leucine 154 to glycine 158, aspartate 187, glycine 200, and asparagine 289. A Fe cation-binding site is contributed by aspartate 317.

This sequence belongs to the KAE1 / TsaD family. Fe(2+) serves as cofactor.

The protein resides in the cytoplasm. The catalysed reaction is L-threonylcarbamoyladenylate + adenosine(37) in tRNA = N(6)-L-threonylcarbamoyladenosine(37) in tRNA + AMP + H(+). Functionally, required for the formation of a threonylcarbamoyl group on adenosine at position 37 (t(6)A37) in tRNAs that read codons beginning with adenine. Is involved in the transfer of the threonylcarbamoyl moiety of threonylcarbamoyl-AMP (TC-AMP) to the N6 group of A37, together with TsaE and TsaB. TsaD likely plays a direct catalytic role in this reaction. This Ruthia magnifica subsp. Calyptogena magnifica protein is tRNA N6-adenosine threonylcarbamoyltransferase.